Here is a 118-residue protein sequence, read N- to C-terminus: D-dopachrome decarboxylase (118 aa).

Residue P2 is modified to N-acetylproline.

Belongs to the MIF family. As to quaternary structure, homotrimer.

Its subcellular location is the cytoplasm. It carries out the reaction D-dopachrome + H(+) = 5,6-dihydroxyindole + CO2. Functionally, tautomerization of D-dopachrome with decarboxylation to give 5,6-dihydroxyindole (DHI). The polypeptide is D-dopachrome decarboxylase (ddt) (Xenopus tropicalis (Western clawed frog)).